The primary structure comprises 217 residues: Regulator of G-protein signaling 19 (217 aa).

Positions 1–29 are disordered; it reads MPTPHEAEKQITGPEEADRPPSMSSHDTA. Phosphoserine is present on residues Ser-24 and Ser-97. The region spanning 90–206 is the RGS domain; that stretch reads SFDKLMHSPA…LSSPTYRALL (117 aa). Residue Ser-151 is modified to Phosphoserine; by MAPK1 and MAPK3. An interaction with GIPC region spans residues 207 to 217; it reads LQGPSQSSSEA.

As to quaternary structure, interacts with GIPC PDZ domain. Interacts with GNAO1. Post-translationally, fatty acylated. Heavily palmitoylated in the cysteine string motif. In terms of processing, phosphorylated, mainly on serine residues. In terms of tissue distribution, highest expression in lung. Placenta, liver and heart also express high levels of GAIP.

The protein localises to the membrane. In terms of biological role, inhibits signal transduction by increasing the GTPase activity of G protein alpha subunits thereby driving them into their inactive GDP-bound form. Binds to G-alpha subfamily 1 members, with the order G(i)a3 &gt; G(i)a1 &gt; G(o)a &gt;&gt; G(z)a/G(i)a2. Activity on G(z)-alpha is inhibited by phosphorylation and palmitoylation of the G-protein. This is Regulator of G-protein signaling 19 (RGS19) from Homo sapiens (Human).